Reading from the N-terminus, the 478-residue chain is MREPLLQLIVLSLIIIVVNTQFESGRLCFCKGFEAVEPCDCSKPQTIDKLNNHRIYEKVQKLLKKDFFRFYKVNMDKTCPFWADDRQCGTNQCGIAFCDDEVPAGLRRRNAVNMEAAAVKEEEDDDAEKCADAGNNIDPMDRTLHDDEKRQLDAMDHHDDGLEDKFCEIEDDESDGMHYVDLSKNPERYTGYAGKSPQRVWKSIYEENCFKPDPKFDKNFLTNPSNFGMCLEKRVFYRLISGLHSAITISIAAYNYKPPPPSLGQFGSQMGTWFRNTEMFAGRFGTKWSWEGPQRLRNVYFIYLLELRALLKAAPYLQNELFYTGNDVEDAETRKAVEDLLEEIRAYPNHFDESEMFTGVESHARALREEFRSHFVNISRIMDCVECDKCRLWGKVQTHGMGTALKILFSDLPHSHYKQDSSKFQLTRNEVVALLQSFGRYSSSILEVDNFREDMYPGESVMNTAADGPPRKSNKIDL.

Residues 1 to 20 (MREPLLQLIVLSLIIIVVNT) form the signal peptide. 6 cysteine pairs are disulfide-bonded: Cys-28-Cys-41, Cys-30-Cys-39, Cys-79-Cys-384, Cys-88-Cys-93, Cys-209-Cys-230, and Cys-387-Cys-390. Residues 117 to 143 (AAVKEEEDDDAEKCADAGNNIDPMDRT) are disordered. 3 residues coordinate FAD: Arg-188, Thr-190, and Trp-201. FAD is bound by residues Ser-241, His-244, Arg-283, and Arg-295. Residue Asn-377 is glycosylated (N-linked (GlcNAc...) asparagine). A disordered region spans residues 459–478 (ESVMNTAADGPPRKSNKIDL).

This sequence belongs to the EROs family. May function both as a monomer and a homodimer. FAD is required as a cofactor.

It is found in the endoplasmic reticulum membrane. Its function is as follows. Oxidoreductase involved in disulfide bond formation in the endoplasmic reticulum. Efficiently reoxidizes pdi-1, the enzyme catalyzing protein disulfide formation, in order to allow pdi-1 to sustain additional rounds of disulfide formation. Following pdi reoxidation, passes its electrons to molecular oxygen via FAD, leading to the production of reactive oxygen species (ROS) in the cell. The polypeptide is Endoplasmic reticulum oxidoreductin-1 (ero-1) (Caenorhabditis elegans).